Consider the following 145-residue polypeptide: D-aminoacyl-tRNA deacylase (145 aa).

The Gly-cisPro motif, important for rejection of L-amino acids motif lies at 137-138; it reads GP.

Belongs to the DTD family. Homodimer.

It is found in the cytoplasm. It catalyses the reaction glycyl-tRNA(Ala) + H2O = tRNA(Ala) + glycine + H(+). It carries out the reaction a D-aminoacyl-tRNA + H2O = a tRNA + a D-alpha-amino acid + H(+). Functionally, an aminoacyl-tRNA editing enzyme that deacylates mischarged D-aminoacyl-tRNAs. Also deacylates mischarged glycyl-tRNA(Ala), protecting cells against glycine mischarging by AlaRS. Acts via tRNA-based rather than protein-based catalysis; rejects L-amino acids rather than detecting D-amino acids in the active site. By recycling D-aminoacyl-tRNA to D-amino acids and free tRNA molecules, this enzyme counteracts the toxicity associated with the formation of D-aminoacyl-tRNA entities in vivo and helps enforce protein L-homochirality. The chain is D-aminoacyl-tRNA deacylase from Pseudomonas entomophila (strain L48).